The primary structure comprises 153 residues: Pheromone-binding protein Gp-9 (153 aa).

Positions 1–19 are cleaved as a signal peptide; it reads MKTFVLHIFIFALVAFASA. Cystine bridges form between C37–C77, C73–C129, and C118–C138.

This sequence belongs to the PBP/GOBP family. As to quaternary structure, homodimer.

The protein localises to the secreted. Functionally, colony queen number, a major feature of social organization, is associated with worker genotype for Gp-9. Colonies are headed by either a single reproductive queen (monogyne form) or multiple queens (polygyne form). Differences in worker Gp-9 genotypes between social forms may cause differences in workers' abilities to recognize queens and regulate their numbers. The chain is Pheromone-binding protein Gp-9 from Solenopsis daguerrei (Workerless parasitic ant).